The chain runs to 152 residues: Ribosome maturation factor RimP (152 aa).

Belongs to the RimP family.

The protein resides in the cytoplasm. In terms of biological role, required for maturation of 30S ribosomal subunits. The protein is Ribosome maturation factor RimP of Alkaliphilus metalliredigens (strain QYMF).